Consider the following 56-residue polypeptide: Small ribosomal subunit protein uS14 (56 aa).

C21, C24, C39, and C42 together coordinate Zn(2+).

Belongs to the universal ribosomal protein uS14 family. Zinc-binding uS14 subfamily. As to quaternary structure, part of the 30S ribosomal subunit. It depends on Zn(2+) as a cofactor.

Its function is as follows. Binds 16S rRNA, required for the assembly of 30S particles. This Methanospirillum hungatei JF-1 (strain ATCC 27890 / DSM 864 / NBRC 100397 / JF-1) protein is Small ribosomal subunit protein uS14.